Here is a 639-residue protein sequence, read N- to C-terminus: Chaperone protein DnaK (639 aa).

At threonine 198 the chain carries Phosphothreonine; by autocatalysis. Residues 604–639 are disordered; the sequence is KSQAQGGDNADAGKQANAAADDVVDAEFEEVKDDKK. Residues 606–624 show a composition bias toward low complexity; it reads QAQGGDNADAGKQANAAAD. Positions 625-639 are enriched in acidic residues; it reads DVVDAEFEEVKDDKK.

It belongs to the heat shock protein 70 family.

In terms of biological role, acts as a chaperone. The chain is Chaperone protein DnaK from Shewanella baltica (strain OS223).